Reading from the N-terminus, the 43-residue chain is Lanthionine-containing peptide SapB (43 aa).

The first 21 residues, 1-21, serve as a signal peptide directing secretion; that stretch reads MALLDLQAMDTPAEDSFGELA. Cross-links (lanthionine (Ser-Cys)) lie at residues 24–31 and 34–41; these read SQVSLLVC and SSLSVVLC. 2,3-didehydroalanine (Ser) occurs at positions 27 and 37.

It belongs to the lanthionine-containing morphogen protein family. Maturation involves the enzymatic conversion of Ser into dehydrated AA and the formation of thioether bonds with cysteine. This is followed by membrane translocation and cleavage of the modified precursor.

Functionally, lanthionine-containing peptide devoid of antibiotic properties, involved in the formation of aerial mycelium. Suggested to self-assemble at air-water interfaces, thus providing a film of surfactant through which nascent aerial hyphae can emerge. The aerial hyphae differentiate further into spores. This Streptomyces griseus subsp. griseus (strain JCM 4626 / CBS 651.72 / NBRC 13350 / KCC S-0626 / ISP 5235) protein is Lanthionine-containing peptide SapB (ramS).